The chain runs to 191 residues: Phosphoheptose isomerase (191 aa).

The SIS domain occupies Ile34–Ser191. Asn49–Gly51 lines the substrate pocket. Zn(2+) contacts are provided by His58 and Glu62. Substrate-binding positions include Glu62, Asn91 to Asp92, Thr117 to Ser119, Ser122, and Gln169. The Zn(2+) site is built by Gln169 and His177.

The protein belongs to the SIS family. GmhA subfamily. Requires Zn(2+) as cofactor.

The protein localises to the cytoplasm. The catalysed reaction is 2 D-sedoheptulose 7-phosphate = D-glycero-alpha-D-manno-heptose 7-phosphate + D-glycero-beta-D-manno-heptose 7-phosphate. It participates in carbohydrate biosynthesis; D-glycero-D-manno-heptose 7-phosphate biosynthesis; D-glycero-alpha-D-manno-heptose 7-phosphate and D-glycero-beta-D-manno-heptose 7-phosphate from sedoheptulose 7-phosphate: step 1/1. Functionally, catalyzes the isomerization of sedoheptulose 7-phosphate in D-glycero-D-manno-heptose 7-phosphate. The polypeptide is Phosphoheptose isomerase (Aquifex aeolicus (strain VF5)).